A 131-amino-acid polypeptide reads, in one-letter code: Small ribosomal subunit protein uS8 (131 aa).

Belongs to the universal ribosomal protein uS8 family. Part of the 30S ribosomal subunit. Contacts proteins S5 and S12.

Its function is as follows. One of the primary rRNA binding proteins, it binds directly to 16S rRNA central domain where it helps coordinate assembly of the platform of the 30S subunit. The sequence is that of Small ribosomal subunit protein uS8 from Burkholderia ambifaria (strain MC40-6).